Reading from the N-terminus, the 122-residue chain is Large ribosomal subunit protein uL18 (122 aa).

The protein belongs to the universal ribosomal protein uL18 family. Part of the 50S ribosomal subunit; part of the 5S rRNA/L5/L18/L25 subcomplex. Contacts the 5S and 23S rRNAs.

This is one of the proteins that bind and probably mediate the attachment of the 5S RNA into the large ribosomal subunit, where it forms part of the central protuberance. This Mycobacterium tuberculosis (strain ATCC 25177 / H37Ra) protein is Large ribosomal subunit protein uL18.